Consider the following 351-residue polypeptide: Peptide chain release factor 1 (351 aa).

The residue at position 229 (glutamine 229) is an N5-methylglutamine. The tract at residues 278-297 (RVDDERSADRAAQVGSGDRS) is disordered.

This sequence belongs to the prokaryotic/mitochondrial release factor family. In terms of processing, methylated by PrmC. Methylation increases the termination efficiency of RF1.

Its subcellular location is the cytoplasm. In terms of biological role, peptide chain release factor 1 directs the termination of translation in response to the peptide chain termination codons UAG and UAA. The sequence is that of Peptide chain release factor 1 from Roseobacter denitrificans (strain ATCC 33942 / OCh 114) (Erythrobacter sp. (strain OCh 114)).